The chain runs to 448 residues: uncharacterized protein (448 aa).

257–264 (GRNAQGKT) is a binding site for ATP.

This is an uncharacterized protein from Methanocaldococcus jannaschii (strain ATCC 43067 / DSM 2661 / JAL-1 / JCM 10045 / NBRC 100440) (Methanococcus jannaschii).